Reading from the N-terminus, the 120-residue chain is Large ribosomal subunit protein bL17 (120 aa).

Belongs to the bacterial ribosomal protein bL17 family. As to quaternary structure, part of the 50S ribosomal subunit. Contacts protein L32.

In Mesomycoplasma hyopneumoniae (strain 7448) (Mycoplasma hyopneumoniae), this protein is Large ribosomal subunit protein bL17.